The sequence spans 157 residues: Probable calcium-binding protein CML23 (157 aa).

4 EF-hand domains span residues 11–46 (GSME…LSPN), 47–82 (ASQE…SDQS), 86–121 (SAIR…LGEK), and 122–157 (CSIQ…NGSA). Positions 24, 26, 28, 30, 35, 60, 62, 64, 71, 99, 101, 103, 105, 110, 135, 137, 139, 141, and 146 each coordinate Ca(2+).

Functionally, potential calcium sensor. This is Probable calcium-binding protein CML23 (CML23) from Arabidopsis thaliana (Mouse-ear cress).